We begin with the raw amino-acid sequence, 353 residues long: Hydrazine synthase subunit gamma (353 aa).

An N-terminal signal peptide occupies residues 1–39 (MAREMRLGGKERMKTGVVKIGLVAALGVVGLISAGGVYA). Residues Cys-102, Cys-105, and His-106 each coordinate heme c. Residues Asp-118, Leu-119, Glu-122, Gly-123, Ser-126, Asn-129, Leu-139, and Pro-141 each coordinate Ca(2+). Cys-165, Cys-225, Cys-228, and His-229 together coordinate heme c. The region spanning 209-353 (EAQKRGQKIF…QDLVEYLKAL (145 aa)) is the Cytochrome c domain. Ca(2+)-binding residues include Asp-296, Ser-306, Gly-307, and Thr-308. His-332 provides a ligand contact to heme c.

In terms of assembly, part of the hydrazine synthase complex that forms an elongated dimer of heterotrimers composed of one alpha, one beta and one gamma subunit. Requires heme c as cofactor.

It is found in the anammoxosome. It carries out the reaction hydrazine + 3 Fe(III)-[cytochrome c] + H2O = nitric oxide + 3 Fe(II)-[cytochrome c] + NH4(+) + 2 H(+). Its pathway is nitrogen metabolism. In terms of biological role, component of the hydrazine synthase complex that catalyzes the condensation of nitric oxide (NO) with ammonium to form hydrazine. The gamma subunit catalyzes the first half-reaction, i.e. the three-electron reduction of nitric oxide to hydroxylamine; it may obtain electrons from the triheme cytochrome c kuste2854. Is involved in anaerobic ammonium oxidation (anammox), a biological process in which nitrite is used as the electron acceptor in the conversion of ammonium to dinitrogen gas (N2) and water; this bacterial process has a major role in the Earth's nitrogen cycle and has been estimated to synthesize up to 50% of the dinitrogen gas emitted into our atmosphere from the oceans. The polypeptide is Hydrazine synthase subunit gamma (Kuenenia stuttgartiensis).